The following is a 372-amino-acid chain: Protein phosphatase Mn(2+)-dependent 1K (372 aa).

The transit peptide at 1–29 directs the protein to the mitochondrion; it reads MLSTAFITLVRSGRNQVKKRVLLSSILLQ. The tract at residues 46 to 61 is critical for association with the BCKDH complex; the sequence is RCSRFDPDGSGQPATW. In terms of domain architecture, PPM-type phosphatase spans 94 to 346; it reads NVGCASLIGK…DNSTAVVVPF (253 aa). D127 and G128 together coordinate Mn(2+). S248 carries the post-translational modification Phosphoserine. Mn(2+) is bound by residues D298 and D337.

Belongs to the PP2C family. In terms of assembly, interacts with E1 and E2 components of the branched-chain alpha-ketoacid dehydrogenase (BCKDH) complex. Interacts with both BCKDHA and BCKDHB chains of the E1 subunit. Interacts with the 24-meric DBT/E2 core of the BCKD complex with a 1:1 stoichiometry; the N-terminal region (residues 49-61) of PPM1K and C-terminal linker of the lipoyl domain of DBT/E2 (residues 145-160) are critical for this interaction whereas the lipoyl prosthetic group is dispensable. Competes with BCKDK for binding to DBT/E2; this interaction is modulated by branched-chain alpha-keto acids (BCKAs). At steady state, BCKDH holoenzyme preferentially binds BCKDK and BCKDHA/E1 is phosphorylated. In response to high levels of BCKAs, BCKDK is replaced by PPM1K leading to BCKDHA/E1 dephosphorylation. Requires Mn(2+) as cofactor.

The protein localises to the mitochondrion matrix. It catalyses the reaction O-phospho-L-seryl-[3-methyl-2-oxobutanoate dehydrogenase] + H2O = L-seryl-[3-methyl-2-oxobutanoate dehydrogenase] + phosphate. It carries out the reaction O-phospho-L-seryl-[protein] + H2O = L-seryl-[protein] + phosphate. It functions in the pathway protein modification. Its function is as follows. Serine/threonine-protein phosphatase component of macronutrients metabolism. Together with BCKDK serves as a metabolic regulatory node that coordinates branched-chain amino acids (BCAAs) and protein synthesis with glucose and lipid metabolism via two distinct phosphoprotein targets: BCKDHA/E1a subunit of the branched-chain alpha-ketoacid dehydrogenase (BCKDH) complex and ACLY, a lipogenic enzyme of Krebs cycle. At high levels of branched-chain ketoacids (BCKAs), dephosphorylates and activates mitochondrial BCKDH complex, a multisubunit complex consisting of three components, heterotetrameric E1 composed of BCKDHA and BCKDHB chains, 24-meric E2 core composed of DBT and homodimeric E3 composed of DLD, each involved in different steps of BCAA catabolism. Tightly associates with the E2 subunit of BCKDH complex and dephosphorylates Ser-333 of BCKDHA chain of the E1 subunit likely through on-off binding to individual E2 subunits of the 24-meric E2 core to increase the efficiency of the dephosphorylation reaction. Appears to dephosphorylate and inactivate cytosolic ACLY in response to changes of cellular carbohydrate abundance. Overnutrition and in particular high-fructose diet, activates MLXIPL/ChREBP leading to increased BCKDK to PPM1K ratio, phosphorylation of ACLY on Ser-454 and activation of its enzymatic activity that ultimately results in the generation of acetyl-CoA and malonyl-CoA immediate substrates of de novo lipogenesis. Recognizes phosphosites having SxS or RxxS motifs and strictly depends on Mn(2+) ions for the phosphatase activity. Regulates Ca(2+)-induced opening of mitochondrial transition pore and apoptotic cell death. The polypeptide is Protein phosphatase Mn(2+)-dependent 1K (Ppm1k) (Rattus norvegicus (Rat)).